Consider the following 228-residue polypeptide: Large ribosomal subunit protein uL16 (228 aa).

The protein belongs to the universal ribosomal protein uL16 family. As to quaternary structure, component of the small ribosomal subunit. Mature ribosomes consist of a small (40S) and a large (60S) subunit. The 40S subunit contains about 33 different proteins and 1 molecule of RNA (18S). The 60S subunit contains about 49 different proteins and 3 molecules of RNA (25S, 5.8S and 5S).

This is Large ribosomal subunit protein uL16 (RPL10) from Pinus taeda (Loblolly pine).